Here is a 663-residue protein sequence, read N- to C-terminus: Translation factor GUF1 homolog, mitochondrial (663 aa).

A mitochondrion-targeting transit peptide spans 1-33 (MAGAAALRRSARRVVLPGAYALSRALQHPERLL). Residues 55–247 (ERVRNFSIIA…AVIERIPSPP (193 aa)) form the tr-type G domain. Residues 64–71 (AHVDHGKS), 140–144 (DTPGH), and 194–197 (NKID) each bind GTP.

This sequence belongs to the TRAFAC class translation factor GTPase superfamily. Classic translation factor GTPase family. LepA subfamily.

It localises to the mitochondrion inner membrane. It catalyses the reaction GTP + H2O = GDP + phosphate + H(+). Functionally, promotes mitochondrial protein synthesis. May act as a fidelity factor of the translation reaction, by catalyzing a one-codon backward translocation of tRNAs on improperly translocated ribosomes. Binds to mitochondrial ribosomes in a GTP-dependent manner. The polypeptide is Translation factor GUF1 homolog, mitochondrial (Oryza sativa subsp. japonica (Rice)).